Reading from the N-terminus, the 334-residue chain is Fructose-1,6-bisphosphatase class 1 (334 aa).

4 residues coordinate Mg(2+): Glu91, Asp113, Leu115, and Asp116. Substrate is bound by residues 116 to 119 (DGSS), Asn208, and Lys274. Glu280 lines the Mg(2+) pocket.

Belongs to the FBPase class 1 family. In terms of assembly, homotetramer. It depends on Mg(2+) as a cofactor.

The protein resides in the cytoplasm. It catalyses the reaction beta-D-fructose 1,6-bisphosphate + H2O = beta-D-fructose 6-phosphate + phosphate. Its pathway is carbohydrate biosynthesis; gluconeogenesis. The sequence is that of Fructose-1,6-bisphosphatase class 1 from Janthinobacterium sp. (strain Marseille) (Minibacterium massiliensis).